We begin with the raw amino-acid sequence, 169 residues long: Acetolactate synthase small subunit (169 aa).

An ACT domain is found at 8 to 85 (TLSVLVEDTP…KVVEQEADNS (78 aa)).

The protein belongs to the acetolactate synthase small subunit family. As to quaternary structure, dimer of large and small chains.

The enzyme catalyses 2 pyruvate + H(+) = (2S)-2-acetolactate + CO2. The protein operates within amino-acid biosynthesis; L-isoleucine biosynthesis; L-isoleucine from 2-oxobutanoate: step 1/4. It participates in amino-acid biosynthesis; L-valine biosynthesis; L-valine from pyruvate: step 1/4. The polypeptide is Acetolactate synthase small subunit (ilvH) (Mycobacterium leprae (strain TN)).